The primary structure comprises 253 residues: Sulfate transporter CysZ (253 aa).

4 consecutive transmembrane segments (helical) span residues 31–51 (FVIL…WWLF), 72–92 (LSYL…GYFF), 151–171 (IVLL…PVLW), and 222–242 (IPVL…AMWV).

This sequence belongs to the CysZ family.

The protein resides in the cell inner membrane. In terms of biological role, possibly involved in sulfate transport. Its function is as follows. High affinity, high specificity proton-dependent sulfate transporter, which mediates sulfate uptake. Provides the sulfur source for the cysteine synthesis pathway. This Salmonella typhimurium (strain LT2 / SGSC1412 / ATCC 700720) protein is Sulfate transporter CysZ.